A 180-amino-acid chain; its full sequence is Inosine/xanthosine triphosphatase (180 aa).

Thr8–Lys13 is a substrate binding site. Positions 38 and 68 each coordinate Mg(2+). Glu68–Ala69 contributes to the substrate binding site.

Belongs to the YjjX NTPase family. In terms of assembly, homodimer. The cofactor is Mg(2+). Requires Mn(2+) as cofactor.

It catalyses the reaction XTP + H2O = XDP + phosphate + H(+). The enzyme catalyses ITP + H2O = IDP + phosphate + H(+). Functionally, phosphatase that hydrolyzes non-canonical purine nucleotides such as XTP and ITP to their respective diphosphate derivatives. Probably excludes non-canonical purines from DNA/RNA precursor pool, thus preventing their incorporation into DNA/RNA and avoiding chromosomal lesions. This Yersinia pestis bv. Antiqua (strain Antiqua) protein is Inosine/xanthosine triphosphatase.